Here is a 411-residue protein sequence, read N- to C-terminus: Protein Rv3035 (411 aa).

The sequence is that of Protein Rv3035 from Mycobacterium tuberculosis (strain ATCC 25618 / H37Rv).